Here is a 179-residue protein sequence, read N- to C-terminus: NADH-quinone oxidoreductase subunit I (179 aa).

4Fe-4S ferredoxin-type domains are found at residues 45–74 (RHPD…VEAA) and 90–119 (KVYE…LGNE). [4Fe-4S] cluster-binding residues include cysteine 54, cysteine 57, cysteine 60, cysteine 64, cysteine 99, cysteine 102, cysteine 105, and cysteine 109. The segment at 146–179 (PQRREAQRTGKPVRLGFKVPKGPRPELEGVEYPR) is disordered. A compositionally biased stretch (basic and acidic residues) spans 168–179 (PRPELEGVEYPR).

It belongs to the complex I 23 kDa subunit family. In terms of assembly, NDH-1 is composed of 15 different subunits. Subunits NuoA, H, J, K, L, M, N constitute the membrane sector of the complex. [4Fe-4S] cluster serves as cofactor.

Its subcellular location is the cell membrane. The catalysed reaction is a quinone + NADH + 5 H(+)(in) = a quinol + NAD(+) + 4 H(+)(out). NDH-1 shuttles electrons from NADH, via FMN and iron-sulfur (Fe-S) centers, to quinones in the respiratory chain. The immediate electron acceptor for the enzyme in this species is believed to be ubiquinone. Couples the redox reaction to proton translocation (for every two electrons transferred, four hydrogen ions are translocated across the cytoplasmic membrane), and thus conserves the redox energy in a proton gradient. In Deinococcus geothermalis (strain DSM 11300 / CIP 105573 / AG-3a), this protein is NADH-quinone oxidoreductase subunit I.